A 346-amino-acid chain; its full sequence is Holliday junction branch migration complex subunit RuvB (346 aa).

Residues 4–184 (TDRLIAPTAK…FGIVQRLEFY (181 aa)) are large ATPase domain (RuvB-L). Residues Arg24, Gly65, Lys68, Thr69, Thr70, 131 to 133 (EDF), Arg174, Tyr184, and Arg221 contribute to the ATP site. Mg(2+) is bound at residue Thr69. Residues 185-255 (NVKDLTHIVA…LADKALNMLN (71 aa)) are small ATPAse domain (RuvB-S). The head domain (RuvB-H) stretch occupies residues 258–346 (ERGFDHMDRR…QESQGGEGIA (89 aa)). DNA is bound by residues Arg294, Arg313, and Arg318.

Belongs to the RuvB family. In terms of assembly, homohexamer. Forms an RuvA(8)-RuvB(12)-Holliday junction (HJ) complex. HJ DNA is sandwiched between 2 RuvA tetramers; dsDNA enters through RuvA and exits via RuvB. An RuvB hexamer assembles on each DNA strand where it exits the tetramer. Each RuvB hexamer is contacted by two RuvA subunits (via domain III) on 2 adjacent RuvB subunits; this complex drives branch migration. In the full resolvosome a probable DNA-RuvA(4)-RuvB(12)-RuvC(2) complex forms which resolves the HJ.

It localises to the cytoplasm. It carries out the reaction ATP + H2O = ADP + phosphate + H(+). The RuvA-RuvB-RuvC complex processes Holliday junction (HJ) DNA during genetic recombination and DNA repair, while the RuvA-RuvB complex plays an important role in the rescue of blocked DNA replication forks via replication fork reversal (RFR). RuvA specifically binds to HJ cruciform DNA, conferring on it an open structure. The RuvB hexamer acts as an ATP-dependent pump, pulling dsDNA into and through the RuvAB complex. RuvB forms 2 homohexamers on either side of HJ DNA bound by 1 or 2 RuvA tetramers; 4 subunits per hexamer contact DNA at a time. Coordinated motions by a converter formed by DNA-disengaged RuvB subunits stimulates ATP hydrolysis and nucleotide exchange. Immobilization of the converter enables RuvB to convert the ATP-contained energy into a lever motion, pulling 2 nucleotides of DNA out of the RuvA tetramer per ATP hydrolyzed, thus driving DNA branch migration. The RuvB motors rotate together with the DNA substrate, which together with the progressing nucleotide cycle form the mechanistic basis for DNA recombination by continuous HJ branch migration. Branch migration allows RuvC to scan DNA until it finds its consensus sequence, where it cleaves and resolves cruciform DNA. This is Holliday junction branch migration complex subunit RuvB from Cellvibrio japonicus (strain Ueda107) (Pseudomonas fluorescens subsp. cellulosa).